We begin with the raw amino-acid sequence, 201 residues long: Adenylyl-sulfate kinase (201 aa).

ATP is bound at residue Gly35 to Ser42. Ser109 acts as the Phosphoserine intermediate in catalysis.

Belongs to the APS kinase family.

The catalysed reaction is adenosine 5'-phosphosulfate + ATP = 3'-phosphoadenylyl sulfate + ADP + H(+). It functions in the pathway sulfur metabolism; hydrogen sulfide biosynthesis; sulfite from sulfate: step 2/3. Functionally, catalyzes the synthesis of activated sulfate. The sequence is that of Adenylyl-sulfate kinase from Erwinia tasmaniensis (strain DSM 17950 / CFBP 7177 / CIP 109463 / NCPPB 4357 / Et1/99).